The sequence spans 462 residues: Tubby-like F-box protein 7 (462 aa).

One can recognise an F-box domain in the interval 54–109 (SKWAGLPPELLRDVMKRLEEDDSNWPSRKDVVACASVCTTWRDMCKDIVRNPEFCG). Disordered regions lie at residues 317–338 (FSEF…DDVN) and 383–418 (QPSS…SSSN). A compositionally biased stretch (low complexity) spans 383 to 417 (QPSSGAASEPSQAGQAAQQQTQPSQPSSSSSSSSS).

It belongs to the TUB family. In terms of tissue distribution, ubiquitous.

This chain is Tubby-like F-box protein 7 (TULP7), found in Oryza sativa subsp. japonica (Rice).